Here is a 92-residue protein sequence, read N- to C-terminus: Neurophysin 2 (92 aa).

7 disulfides stabilise this stretch: C10–C54, C13–C27, C21–C44, C28–C34, C61–C73, C67–C85, and C74–C79.

It belongs to the vasopressin/oxytocin family. There is an equilibrium between the monomeric and dimeric forms. On peptide binding the dimeric form predominates. A shorter neurophysin molecule (1-90) also exists and is probably derived from the complete protein by proteolytic degradation (in vivo or after extraction).

The protein localises to the secreted. Functionally, neurophysin 2 specifically binds vasopressin. The chain is Neurophysin 2 (AVP) from Loxodonta africana (African elephant).